The following is a 2327-amino-acid chain: Chondroitin sulfate proteoglycan 4 (2327 aa).

An N-terminal signal peptide occupies residues 1-29 (MLLGPGHPLSAPALALALTLALLVRSTAP). 2 Laminin G-like domains span residues 30 to 193 (ASFF…HEGC) and 203 to 381 (VGLG…SAGC). The segment at 30–640 (ASFFGENHLE…HRGGPAQDLT (611 aa)) is globular or compact configuration stabilized by disulfide bonds. Residues 30–640 (ASFFGENHLE…HRGGPAQDLT (611 aa)) form a neurite growth inhibition region. Topologically, residues 30–2229 (ASFFGENHLE…LGFLEANMFS (2200 aa)) are extracellular. An N-linked (GlcNAc...) asparagine glycan is attached at N130. An intrachain disulfide couples C170 to C193. N-linked (GlcNAc...) asparagine glycosylation is present at N349. Residues C355 and C381 are joined by a disulfide bond. Residue N428 is glycosylated (N-linked (GlcNAc...) asparagine). CSPG repeat units follow at residues 429–524 (FTQL…LEVS), 554–646 (PRII…VSDG), and 663–765 (AIQI…LEVQ). Residues 575–1045 (GPEIFQAYDP…RGGQRLLTTD (471 aa)) are interaction with COL6A2. Residues 632 to 1451 (RGGPAQDLTF…SETQTDAFVL (820 aa)) are interaction with COL5A1. N686 and N773 each carry an N-linked (GlcNAc...) asparagine glycan. 2 CSPG repeats span residues 784-883 (TVWM…FRVT) and 903-994 (NAPV…FVAT). S1000 is a glycosylation site (O-linked (Xyl...) (chondroitin sulfate) serine). CSPG repeat units follow at residues 1023-1115 (APVQ…VSDG), 1131-1221 (YLHV…FSVA), 1243-1342 (PLQL…LDVA), 1361-1454 (TVIP…LLAN), 1478-1568 (PPVL…LSDG), 1586-1684 (LLSL…LLLS), 1709-1808 (PSRL…FRAH), 1837-1929 (PPQP…MSDG), and 1946-2034 (TIEV…VVAL). Residues N1136 and N1207 are each glycosylated (N-linked (GlcNAc...) asparagine). N-linked (GlcNAc...) asparagine glycosylation is found at N1369 and N1454. Positions 1591-2226 (GTRKLTVCPE…GGFLGFLEAN (636 aa)) are neurite growth inhibition. The tract at residues 1592–2226 (TRKLTVCPES…GGFLGFLEAN (635 aa)) is cysteine-containing. N1650 carries N-linked (GlcNAc...) asparagine glycosylation. N-linked (GlcNAc...) asparagine glycosylation is found at N1914, N2021, N2039, N2045, and N2080. A CSPG 15 repeat occupies 2043-2152 (TVNVTVQALL…AGDRLTLELW (110 aa)). The interval 2190-2210 (ETEKPGRSVPTGQPGQAASSP) is disordered. Polar residues predominate over residues 2199-2210 (PTGQPGQAASSP). Residues 2230 to 2250 (IIIPVCLILLLLALILPLLFY) form a helical membrane-spanning segment. At 2251 to 2327 (LRKRNKTGKH…PALRNGQYWV (77 aa)) the chain is on the cytoplasmic side. At T2257 the chain carries Phosphothreonine; by PKC/PRKCA. Positions 2325-2327 (YWV) match the PDZ-binding motif.

In terms of assembly, interacts with ITGA4 through its chondroitin sulfate glycosaminoglycan. Interacts with BCAR1, CDC42 and ACK1. Interacts with MMP16. Interacts with the first PDZ domain of MPDZ. Interacts with PRKCA. Interacts with LGALS3 and the integrin composed of ITGB1 and ITGA3. Binds TNC, laminin-1, COL5A1 and COL6A2. Interacts with PLG and angiostatin. Binds FGF2 and PDGFA. Interacts with GRIP1, GRIP2 and GRIA2. Forms a ternary complex with GRIP1 and GRIA2. Post-translationally, O-glycosylated; contains glycosaminoglycan chondroitin sulfate which are required for proper localization and function in stress fiber formation. Involved in interaction with MMP16 and ITGA4. Phosphorylation by PRKCA regulates its subcellular location and function in cell motility. In terms of tissue distribution, expressed in microcascular pericytes and not endothelial cells.

The protein resides in the cell membrane. It localises to the apical cell membrane. It is found in the cell projection. Its subcellular location is the lamellipodium membrane. The protein localises to the cell surface. In terms of biological role, proteoglycan playing a role in cell proliferation and migration which stimulates endothelial cells motility during microvascular morphogenesis. May also inhibit neurite outgrowth and growth cone collapse during axon regeneration. Cell surface receptor for collagen alpha 2(VI) which may confer cells ability to migrate on that substrate. Binds through its extracellular N-terminus growth factors, extracellular matrix proteases modulating their activity. May regulate MPP16-dependent degradation and invasion of type I collagen participating in melanoma cells invasion properties. May modulate the plasminogen system by enhancing plasminogen activation and inhibiting angiostatin. Also functions as a signal transducing protein by binding through its cytoplasmic C-terminus scaffolding and signaling proteins. May promote retraction fiber formation and cell polarization through Rho GTPase activation. May stimulate alpha-4, beta-1 integrin-mediated adhesion and spreading by recruiting and activating a signaling cascade through CDC42, ACK1 and BCAR1. May activate FAK and ERK1/ERK2 signaling cascades. In Mus musculus (Mouse), this protein is Chondroitin sulfate proteoglycan 4 (Cspg4).